The chain runs to 1072 residues: MPKRLDINTILVIGSGPIVIGQAAEFDYSGTQACQSLKEEGYKVILVNSNPATIMTDTATADKVYIEPLTLEFVSRIIRKERPDAILPTLGGQTGLNMAVELAKSGVLEECGVEILGTKLSAIEQAEDRDLFRTLMQELNEPTPPSEIIHNLDEAYGFVKEIGYPVIVRPAFTLGGTGGGICHNEEELIEIVTSGLKHSPVTQCLLEKSIAGCKEIEYEVMRDSNDNAIVVCNMENIDPVGVHTGDSIVVAPSQTLSDREYQMLRNTSLRIIRALGIEGGCNVQLALDPYSFQYYVIEVNPRVSRSSALASKATGYPIAKLAAKIAVGLTLDEIVNPVTQKTYACFEPALDYVVSKIPRWPFDKFESANRTLGTQMKATGEVMSIGRNLEESLLKAVRSLELGIYHLELDHLKELDKETMKKRIIKADDERLFIVAEAIRQGVTKEEINEWCEMDFFFLQKVENIVNMEREVKANVGNMEVLQTAKEMGFSDHYIAAAWNKTEREIYDMRKENNMTPVFKMVDTCAAEFESATPYYYSTYADENESIVTDRKSVVVLGSGPIRIGQGVEFDYATVHSVWAIKEAGYEAIIINNNPETVSTDFSISDKLYFEPLTIEDVMHIIDLEKPEGVIVQFGGQTAINLAAKLEEHGVKILGTSLEDLDRAEDRDKFEAALTKLGIPQPVGKTATTVEQAVAIAEEIGYPVLVRPSYVLGGRAMEIVYRQEELLHYMKNAVKVHADHPVLIDRYMVGKEIEVDAISDGENVFIPGIMEHIERAGVHSGDSIGVYPPQSLSEKLKEQIIEHTIALGKGLNIVGLLNIQFVVFEDQVYVIEVNPRASRTVPFLSKITGVPMANVATKVILGQDLVEQGYGTGYHPEEKEVYVKAPVFSFAKLRSVDTTLGPEMKSTGEVMGKDLTLEKALYKGLVASGINIPTHGSVIITVADKDKEEAMEIAKRFHEIGYNLLATAGTAQSLTEQNIPVQVVNKIDSEDYNLLDIIRQGKAQFVINTLTKGKQPARDGFRIRRESVENGVACLTSLDTTRAILRVLESMTFSAHSMKEITQTKRHEVVHA.

Residues 1-401 are carboxyphosphate synthetic domain; the sequence is MPKRLDINTI…SLLKAVRSLE (401 aa). Positions 129, 169, 175, 176, 208, 210, 215, 241, 242, 243, 284, and 298 each coordinate ATP. The ATP-grasp 1 domain occupies 133-327; sequence RTLMQELNEP…IAKLAAKIAV (195 aa). Gln-284, Glu-298, and Asn-300 together coordinate Mg(2+). 3 residues coordinate Mn(2+): Gln-284, Glu-298, and Asn-300. Residues 402-546 form an oligomerization domain region; it reads LGIYHLELDH…YSTYADENES (145 aa). Residues 547 to 929 are carbamoyl phosphate synthetic domain; that stretch reads IVTDRKSVVV…ALYKGLVASG (383 aa). Residues 671-861 form the ATP-grasp 2 domain; sequence EAALTKLGIP…MANVATKVIL (191 aa). ATP contacts are provided by Arg-707, Arg-746, Glu-752, Gly-777, Val-778, His-779, Ser-780, Gln-820, and Glu-832. Mg(2+)-binding residues include Gln-820, Glu-832, and Asn-834. The Mn(2+) site is built by Gln-820, Glu-832, and Asn-834. The region spanning 930–1072 is the MGS-like domain; sequence INIPTHGSVI…QTKRHEVVHA (143 aa). Positions 930–1072 are allosteric domain; the sequence is INIPTHGSVI…QTKRHEVVHA (143 aa).

It belongs to the CarB family. As to quaternary structure, composed of two chains; the small (or glutamine) chain promotes the hydrolysis of glutamine to ammonia, which is used by the large (or ammonia) chain to synthesize carbamoyl phosphate. Tetramer of heterodimers (alpha,beta)4. It depends on Mg(2+) as a cofactor. Requires Mn(2+) as cofactor.

It catalyses the reaction hydrogencarbonate + L-glutamine + 2 ATP + H2O = carbamoyl phosphate + L-glutamate + 2 ADP + phosphate + 2 H(+). The catalysed reaction is hydrogencarbonate + NH4(+) + 2 ATP = carbamoyl phosphate + 2 ADP + phosphate + 2 H(+). It participates in amino-acid biosynthesis; L-arginine biosynthesis; carbamoyl phosphate from bicarbonate: step 1/1. Its pathway is pyrimidine metabolism; UMP biosynthesis via de novo pathway; (S)-dihydroorotate from bicarbonate: step 1/3. In terms of biological role, large subunit of the glutamine-dependent carbamoyl phosphate synthetase (CPSase). CPSase catalyzes the formation of carbamoyl phosphate from the ammonia moiety of glutamine, carbonate, and phosphate donated by ATP, constituting the first step of 2 biosynthetic pathways, one leading to arginine and/or urea and the other to pyrimidine nucleotides. The large subunit (synthetase) binds the substrates ammonia (free or transferred from glutamine from the small subunit), hydrogencarbonate and ATP and carries out an ATP-coupled ligase reaction, activating hydrogencarbonate by forming carboxy phosphate which reacts with ammonia to form carbamoyl phosphate. This Bacillus thuringiensis subsp. konkukian (strain 97-27) protein is Carbamoyl phosphate synthase large chain.